Here is a 273-residue protein sequence, read N- to C-terminus: 2,3,4,5-tetrahydropyridine-2,6-dicarboxylate N-succinyltransferase (273 aa).

Positions 106 and 143 each coordinate substrate.

Belongs to the transferase hexapeptide repeat family. In terms of assembly, homotrimer.

It is found in the cytoplasm. The enzyme catalyses (S)-2,3,4,5-tetrahydrodipicolinate + succinyl-CoA + H2O = (S)-2-succinylamino-6-oxoheptanedioate + CoA. It functions in the pathway amino-acid biosynthesis; L-lysine biosynthesis via DAP pathway; LL-2,6-diaminopimelate from (S)-tetrahydrodipicolinate (succinylase route): step 1/3. This Wolbachia pipientis wMel protein is 2,3,4,5-tetrahydropyridine-2,6-dicarboxylate N-succinyltransferase.